A 165-amino-acid polypeptide reads, in one-letter code: Shikimate kinase (165 aa).

11 to 16 (GAGKTT) is a binding site for ATP. T15 is a binding site for Mg(2+). 3 residues coordinate substrate: D33, R57, and G78. Residue R116 coordinates ATP. R134 lines the substrate pocket.

Belongs to the shikimate kinase family. As to quaternary structure, monomer. Mg(2+) serves as cofactor.

It localises to the cytoplasm. The enzyme catalyses shikimate + ATP = 3-phosphoshikimate + ADP + H(+). Its pathway is metabolic intermediate biosynthesis; chorismate biosynthesis; chorismate from D-erythrose 4-phosphate and phosphoenolpyruvate: step 5/7. In terms of biological role, catalyzes the specific phosphorylation of the 3-hydroxyl group of shikimic acid using ATP as a cosubstrate. The polypeptide is Shikimate kinase (Bacillus anthracis (strain A0248)).